The sequence spans 93 residues: MSNVCIIAWVYGRVQGVGFRYTTQHEAQRLGLTGYAKNMDDGSVEVVACGDAAQVEKLIKWLKEGGPRSARVDKILTEPHSPRETLTGFSIRY.

The cysteines at positions 5 and 49 are disulfide-linked. One can recognise an Acylphosphatase-like domain in the interval 5–93 (CIIAWVYGRV…ETLTGFSIRY (89 aa)). Active-site residues include Arg20 and Asn38.

This sequence belongs to the acylphosphatase family.

It catalyses the reaction an acyl phosphate + H2O = a carboxylate + phosphate + H(+). This is Acylphosphatase from Salmonella typhi.